We begin with the raw amino-acid sequence, 483 residues long: Cobyric acid synthase (483 aa).

In terms of domain architecture, GATase cobBQ-type spans 251 to 438 (ALIVAVPMLP…LHGVFSADRF (188 aa)). Cysteine 333 serves as the catalytic Nucleophile. The active site involves histidine 430.

It belongs to the CobB/CobQ family. CobQ subfamily.

Its pathway is cofactor biosynthesis; adenosylcobalamin biosynthesis. Catalyzes amidations at positions B, D, E, and G on adenosylcobyrinic A,C-diamide. NH(2) groups are provided by glutamine, and one molecule of ATP is hydrogenolyzed for each amidation. In Brucella melitensis biotype 2 (strain ATCC 23457), this protein is Cobyric acid synthase.